The primary structure comprises 199 residues: Recombination protein RecR (199 aa).

The C4-type zinc-finger motif lies at 57–72 (CQQCRTFTEQNLCAIC). Residues 81–176 (GMICVVEMPV…KVSRIAHGVP (96 aa)) enclose the Toprim domain.

It belongs to the RecR family.

Its function is as follows. May play a role in DNA repair. It seems to be involved in an RecBC-independent recombinational process of DNA repair. It may act with RecF and RecO. This chain is Recombination protein RecR, found in Psychromonas ingrahamii (strain DSM 17664 / CCUG 51855 / 37).